Consider the following 555-residue polypeptide: Chaperonin GroEL (555 aa).

Residues T29–P32, K50, D86–T90, G418, and D499 contribute to the ATP site. The tract at residues H528–F555 is disordered. Residues R537–F555 show a composition bias toward gly residues.

It belongs to the chaperonin (HSP60) family. Forms a cylinder of 14 subunits composed of two heptameric rings stacked back-to-back. Interacts with the co-chaperonin GroES.

The protein resides in the cytoplasm. The enzyme catalyses ATP + H2O + a folded polypeptide = ADP + phosphate + an unfolded polypeptide.. In terms of biological role, together with its co-chaperonin GroES, plays an essential role in assisting protein folding. The GroEL-GroES system forms a nano-cage that allows encapsulation of the non-native substrate proteins and provides a physical environment optimized to promote and accelerate protein folding. The protein is Chaperonin GroEL of Orientia tsutsugamushi (Rickettsia tsutsugamushi).